A 138-amino-acid polypeptide reads, in one-letter code: Holo-[acyl-carrier-protein] synthase (138 aa).

Asp11 and Glu65 together coordinate Mg(2+).

This sequence belongs to the P-Pant transferase superfamily. AcpS family. Requires Mg(2+) as cofactor.

It localises to the cytoplasm. The catalysed reaction is apo-[ACP] + CoA = holo-[ACP] + adenosine 3',5'-bisphosphate + H(+). Transfers the 4'-phosphopantetheine moiety from coenzyme A to a Ser of acyl-carrier-protein. The polypeptide is Holo-[acyl-carrier-protein] synthase (Ralstonia nicotianae (strain ATCC BAA-1114 / GMI1000) (Ralstonia solanacearum)).